The sequence spans 204 residues: Thymidine kinase (204 aa).

ATP contacts are provided by residues 18 to 25 (GSMFSGKT) and 91 to 94 (DEGQ). Glu-92 serves as the catalytic Proton acceptor. The Zn(2+) site is built by Cys-148, Cys-151, Cys-180, and His-183.

It belongs to the thymidine kinase family. As to quaternary structure, homotetramer.

Its subcellular location is the cytoplasm. The enzyme catalyses thymidine + ATP = dTMP + ADP + H(+). This is Thymidine kinase from Bdellovibrio bacteriovorus (strain ATCC 15356 / DSM 50701 / NCIMB 9529 / HD100).